We begin with the raw amino-acid sequence, 239 residues long: 3-dehydroquinate dehydratase (239 aa).

Residues 35–37 and Arg-70 contribute to the 3-dehydroquinate site; that span reads ELR. His-133 (proton donor/acceptor) is an active-site residue. Catalysis depends on Lys-160, which acts as the Schiff-base intermediate with substrate. Arg-202 and Gln-225 together coordinate 3-dehydroquinate.

Belongs to the type-I 3-dehydroquinase family. In terms of assembly, homodimer.

It carries out the reaction 3-dehydroquinate = 3-dehydroshikimate + H2O. The protein operates within metabolic intermediate biosynthesis; chorismate biosynthesis; chorismate from D-erythrose 4-phosphate and phosphoenolpyruvate: step 3/7. Its function is as follows. Involved in the third step of the chorismate pathway, which leads to the biosynthesis of aromatic amino acids. Catalyzes the cis-dehydration of 3-dehydroquinate (DHQ) and introduces the first double bond of the aromatic ring to yield 3-dehydroshikimate. This Staphylococcus saprophyticus subsp. saprophyticus (strain ATCC 15305 / DSM 20229 / NCIMB 8711 / NCTC 7292 / S-41) protein is 3-dehydroquinate dehydratase.